The following is a 328-amino-acid chain: L-serine dehydratase/L-threonine deaminase (328 aa).

At Lys41 the chain carries N6-(pyridoxal phosphate)lysine. Residue Pro128 participates in pyridoxal 5'-phosphate binding.

This sequence belongs to the serine/threonine dehydratase family. In terms of assembly, homodimer. The cofactor is pyridoxal 5'-phosphate. As to expression, predominantly expressed in the perivenous regions of the liver.

Its subcellular location is the cytoplasm. It catalyses the reaction L-serine = pyruvate + NH4(+). The catalysed reaction is L-threonine = 2-oxobutanoate + NH4(+). The protein operates within carbohydrate biosynthesis; gluconeogenesis. Its function is as follows. Catalyzes the pyridoxal-phosphate-dependent dehydrative deamination of L-threonine and L-serine to ammonia and alpha-ketobutyrate and pyruvate, respectively. This chain is L-serine dehydratase/L-threonine deaminase (SDS), found in Homo sapiens (Human).